Reading from the N-terminus, the 198-residue chain is FMN-dependent NADH:quinone oxidoreductase (198 aa).

FMN is bound by residues Ser10, 16 to 18, 94 to 97, and 138 to 141; these read SQS, MYNF, and TRGG.

The protein belongs to the azoreductase type 1 family. As to quaternary structure, homodimer. It depends on FMN as a cofactor.

It catalyses the reaction 2 a quinone + NADH + H(+) = 2 a 1,4-benzosemiquinone + NAD(+). The enzyme catalyses N,N-dimethyl-1,4-phenylenediamine + anthranilate + 2 NAD(+) = 2-(4-dimethylaminophenyl)diazenylbenzoate + 2 NADH + 2 H(+). Its function is as follows. Quinone reductase that provides resistance to thiol-specific stress caused by electrophilic quinones. In terms of biological role, also exhibits azoreductase activity. Catalyzes the reductive cleavage of the azo bond in aromatic azo compounds to the corresponding amines. The sequence is that of FMN-dependent NADH:quinone oxidoreductase from Shewanella putrefaciens (strain CN-32 / ATCC BAA-453).